The chain runs to 194 residues: Probable GTP-binding protein EngB (194 aa).

The EngB-type G domain occupies 22-194 (LFLEVAFAGR…WQELDTMLNP (173 aa)). GTP contacts are provided by residues 30-37 (GRSNVGKS), 57-61 (GCTQL), 75-78 (DLPG), 142-145 (TKAD), and 173-175 (FSS). Residues Ser-37 and Thr-59 each contribute to the Mg(2+) site.

Belongs to the TRAFAC class TrmE-Era-EngA-EngB-Septin-like GTPase superfamily. EngB GTPase family. The cofactor is Mg(2+).

Its function is as follows. Necessary for normal cell division and for the maintenance of normal septation. The chain is Probable GTP-binding protein EngB from Desulforapulum autotrophicum (strain ATCC 43914 / DSM 3382 / VKM B-1955 / HRM2) (Desulfobacterium autotrophicum).